The chain runs to 317 residues: Acetyl-coenzyme A carboxylase carboxyl transferase subunit beta (317 aa).

The interval 1-28 (MANNMTDTMTKPDINNDSTSLQQNGNKA) is disordered. In terms of domain architecture, CoA carboxyltransferase N-terminal spans 55–317 (PSTKCSSCHS…LCSVPNVDVQ (263 aa)). Zn(2+)-binding residues include Cys59, Cys62, Cys78, and Cys81. The segment at 59–81 (CSSCHSIITNTALIFNCYVCPHC) adopts a C4-type zinc-finger fold.

Belongs to the AccD/PCCB family. In terms of assembly, acetyl-CoA carboxylase is a heterohexamer composed of biotin carboxyl carrier protein (AccB), biotin carboxylase (AccC) and two subunits each of ACCase subunit alpha (AccA) and ACCase subunit beta (AccD). Requires Zn(2+) as cofactor.

It localises to the cytoplasm. The enzyme catalyses N(6)-carboxybiotinyl-L-lysyl-[protein] + acetyl-CoA = N(6)-biotinyl-L-lysyl-[protein] + malonyl-CoA. It functions in the pathway lipid metabolism; malonyl-CoA biosynthesis; malonyl-CoA from acetyl-CoA: step 1/1. Functionally, component of the acetyl coenzyme A carboxylase (ACC) complex. Biotin carboxylase (BC) catalyzes the carboxylation of biotin on its carrier protein (BCCP) and then the CO(2) group is transferred by the transcarboxylase to acetyl-CoA to form malonyl-CoA. This chain is Acetyl-coenzyme A carboxylase carboxyl transferase subunit beta, found in Psychrobacter cryohalolentis (strain ATCC BAA-1226 / DSM 17306 / VKM B-2378 / K5).